The following is a 368-amino-acid chain: Phosphate acyltransferase (368 aa).

The tract at residues 337-368 (LGDGEHDAGGAGQASPAAGHHAEPSAAQSSKA) is disordered.

It belongs to the PlsX family. As to quaternary structure, homodimer. Probably interacts with PlsY.

It localises to the cytoplasm. It carries out the reaction a fatty acyl-[ACP] + phosphate = an acyl phosphate + holo-[ACP]. It participates in lipid metabolism; phospholipid metabolism. In terms of biological role, catalyzes the reversible formation of acyl-phosphate (acyl-PO(4)) from acyl-[acyl-carrier-protein] (acyl-ACP). This enzyme utilizes acyl-ACP as fatty acyl donor, but not acyl-CoA. This Burkholderia orbicola (strain MC0-3) protein is Phosphate acyltransferase.